A 1147-amino-acid chain; its full sequence is ATP-dependent helicase/deoxyribonuclease subunit B (1147 aa).

Residue 8 to 15 participates in ATP binding; the sequence is GRAGSGKS. Residues C786, C1106, C1109, and C1115 each contribute to the [4Fe-4S] cluster site.

It belongs to the helicase family. AddB/RexB type 1 subfamily. Heterodimer of AddA and AddB. Requires Mg(2+) as cofactor. [4Fe-4S] cluster serves as cofactor.

Its function is as follows. The heterodimer acts as both an ATP-dependent DNA helicase and an ATP-dependent, dual-direction single-stranded exonuclease. Recognizes the chi site generating a DNA molecule suitable for the initiation of homologous recombination. The AddB subunit has 5' -&gt; 3' nuclease activity but not helicase activity. This is ATP-dependent helicase/deoxyribonuclease subunit B from Clostridium botulinum (strain Loch Maree / Type A3).